A 163-amino-acid chain; its full sequence is Phosphopantetheine adenylyltransferase (163 aa).

Thr10 serves as a coordination point for substrate. Residues 10–11 (TF) and His18 each bind ATP. Lys42, Leu74, and Arg88 together coordinate substrate. ATP contacts are provided by residues 89-91 (GLR), Glu99, and 124-130 (NSFISST).

It belongs to the bacterial CoaD family. Homohexamer. Mg(2+) is required as a cofactor.

It localises to the cytoplasm. It catalyses the reaction (R)-4'-phosphopantetheine + ATP + H(+) = 3'-dephospho-CoA + diphosphate. The protein operates within cofactor biosynthesis; coenzyme A biosynthesis; CoA from (R)-pantothenate: step 4/5. Its function is as follows. Reversibly transfers an adenylyl group from ATP to 4'-phosphopantetheine, yielding dephospho-CoA (dPCoA) and pyrophosphate. This Shewanella baltica (strain OS195) protein is Phosphopantetheine adenylyltransferase.